A 202-amino-acid polypeptide reads, in one-letter code: Small ribosomal subunit protein uS4c (202 aa).

An S4 RNA-binding domain is found at 89–152 (MRLDNIIFRL…QSNTFINNCI (64 aa)).

Belongs to the universal ribosomal protein uS4 family. In terms of assembly, part of the 30S ribosomal subunit. Contacts protein S5. The interaction surface between S4 and S5 is involved in control of translational fidelity.

Its subcellular location is the plastid. Its function is as follows. One of the primary rRNA binding proteins, it binds directly to 16S rRNA where it nucleates assembly of the body of the 30S subunit. With S5 and S12 plays an important role in translational accuracy. This is Small ribosomal subunit protein uS4c (rps4) from Epifagus virginiana (Beechdrops).